Consider the following 708-residue polypeptide: Kin of IRRE-like protein 2 (708 aa).

Positions 1-20 (MLRMRVPALLVLLFCFRGRA) are cleaved as a signal peptide. Residues 21-510 (GPSPHFLQQP…GRRDLLPTVR (490 aa)) are Extracellular-facing. Ig-like C2-type domains lie at 24 to 118 (PHFL…AQLH), 123 to 222 (PEAP…ITLS), 227 to 307 (PEVT…TALD), 312 to 394 (PILQ…ARLT), and 398 to 501 (PPVV…ASLG). A disulfide bridge connects residues Cys-45 and Cys-103. N-linked (GlcNAc...) asparagine glycosylation occurs at Asn-143. 2 disulfide bridges follow: Cys-146–Cys-204 and Cys-248–Cys-291. A Cell attachment site motif is present at residues 149–151 (RGD). A glycan (N-linked (GlcNAc...) asparagine) is linked at Asn-301. 2 disulfide bridges follow: Cys-333–Cys-375 and Cys-419–Cys-485. Asn-484 carries an N-linked (GlcNAc...) asparagine glycan. A helical membrane pass occupies residues 511–531 (IVAGVAAATTTLLMVITGVAL). Residues 532-708 (CCWRHSKASA…PSHPRLQTHV (177 aa)) lie on the Cytoplasmic side of the membrane. Residues 545–601 (EQKNLMRIPGSSDGSSSRGPEEEETGSREDRGPIVHTDHSDLVLEEEGTLETKDPTN) are disordered. The span at 553–562 (PGSSDGSSSR) shows a compositional bias: low complexity. Basic and acidic residues predominate over residues 569 to 586 (TGSREDRGPIVHTDHSDL). At Ser-571 the chain carries Phosphoserine. A phosphotyrosine mark is found at Tyr-603, Tyr-604, and Tyr-661. Positions 684–708 (LAPGTPPFPYAAFPTPSHPRLQTHV) are disordered.

The protein belongs to the immunoglobulin superfamily. In terms of assembly, homodimer. Interacts with NPHS2/podocin (via the C-terminus). Interacts with NPHS1 (via the Ig-like domains). Interacts with FYN. N-glycosylated. Post-translationally, the extracellular domain is cleaved leading to the generation of a soluble fragment and a membrane-bound C-terminal fragment, which is further cleaved by gamma-secretase. Highly expressed in beta-cells of the pancreatic islets.

It localises to the cell membrane. In terms of biological role, may regulate basal insulin secretion. This is Kin of IRRE-like protein 2 (KIRREL2) from Homo sapiens (Human).